The following is a 357-amino-acid chain: Tetraacyldisaccharide 4'-kinase (357 aa).

Thr49–Thr56 is an ATP binding site.

It belongs to the LpxK family.

The catalysed reaction is a lipid A disaccharide + ATP = a lipid IVA + ADP + H(+). Its pathway is glycolipid biosynthesis; lipid IV(A) biosynthesis; lipid IV(A) from (3R)-3-hydroxytetradecanoyl-[acyl-carrier-protein] and UDP-N-acetyl-alpha-D-glucosamine: step 6/6. Its function is as follows. Transfers the gamma-phosphate of ATP to the 4'-position of a tetraacyldisaccharide 1-phosphate intermediate (termed DS-1-P) to form tetraacyldisaccharide 1,4'-bis-phosphate (lipid IVA). This Porphyromonas gingivalis (strain ATCC 33277 / DSM 20709 / CIP 103683 / JCM 12257 / NCTC 11834 / 2561) protein is Tetraacyldisaccharide 4'-kinase.